A 310-amino-acid polypeptide reads, in one-letter code: Aspartate carbamoyltransferase catalytic subunit (310 aa).

Carbamoyl phosphate is bound by residues Arg-60 and Thr-61. Residue Lys-88 coordinates L-aspartate. Carbamoyl phosphate contacts are provided by Arg-110, His-138, and Gln-141. 2 residues coordinate L-aspartate: Arg-171 and Arg-225. Gly-266 and Pro-267 together coordinate carbamoyl phosphate.

Belongs to the aspartate/ornithine carbamoyltransferase superfamily. ATCase family. Heterododecamer (2C3:3R2) of six catalytic PyrB chains organized as two trimers (C3), and six regulatory PyrI chains organized as three dimers (R2).

The enzyme catalyses carbamoyl phosphate + L-aspartate = N-carbamoyl-L-aspartate + phosphate + H(+). It participates in pyrimidine metabolism; UMP biosynthesis via de novo pathway; (S)-dihydroorotate from bicarbonate: step 2/3. Functionally, catalyzes the condensation of carbamoyl phosphate and aspartate to form carbamoyl aspartate and inorganic phosphate, the committed step in the de novo pyrimidine nucleotide biosynthesis pathway. The chain is Aspartate carbamoyltransferase catalytic subunit from Christiangramia forsetii (strain DSM 17595 / CGMCC 1.15422 / KT0803) (Gramella forsetii).